Consider the following 258-residue polypeptide: Ribonuclease PH (258 aa).

Residues R86 and G124–R126 contribute to the phosphate site.

It belongs to the RNase PH family. In terms of assembly, homohexameric ring arranged as a trimer of dimers.

The enzyme catalyses tRNA(n+1) + phosphate = tRNA(n) + a ribonucleoside 5'-diphosphate. Phosphorolytic 3'-5' exoribonuclease that plays an important role in tRNA 3'-end maturation. Removes nucleotide residues following the 3'-CCA terminus of tRNAs; can also add nucleotides to the ends of RNA molecules by using nucleoside diphosphates as substrates, but this may not be physiologically important. Probably plays a role in initiation of 16S rRNA degradation (leading to ribosome degradation) during starvation. This chain is Ribonuclease PH, found in Caldicellulosiruptor saccharolyticus (strain ATCC 43494 / DSM 8903 / Tp8T 6331).